Here is a 681-residue protein sequence, read N- to C-terminus: MALLRSLSAQRTAISLVYGRNSSKSSNSVAVAACRSFHQRGSGSTSIAGEGAASESTRGVNGARFLHSGDRPLQASTLVQPEVVSSETVKRSMKQESSQEKNPSPAGSPQRDPLDVSFNDPIAAFKSKTTGELIRAYLVYMICSSEKLVEHNMTLMKLARNLLGQKLFVLLMKSSFYGHFVAGENRHTIVPALERLRSFGVKPILDYSVEEDITQEEAEKREVESSVSSAGDKKEEGSMPQYHVDKSFADRRYKVSSARTYFYLNEATCERNMEIFIKCLEAVSDDDRKAPRAVATGATFGTGITAIKLTALGRPQLLLQLSEVIMRTRKYMEDMVGGQGNVLTHHKTIKDLEKYYATLGDNKDVKEFLNNVTSDKEGILHLFPWSGIVDEDSQLSDTFRVPDPQTGQMRRLISQIPPKEEEMFRNMIRRLNTIVKAAADLDVRIMVDAEQTYFQPAISRITLEMMRKYNKDKAIVFNTYQCYLRETFREVNTDLEQAKRQNFYFGAKLVRGAYMDQERDRAKSLGYPDPVNPTFEATTDMYHRTLSECLRRIKLMKDCDDDARKIGIMVASHNEDTVRFAIQQMKEIGISPEDKVICFGQLLGMCDYITFPLGQAGYSAYKYIPYGPVEEVLPYLSRRAQENKGVLKKIKKEKRLLLSEIRRRLMRGQLFYKPKGNYVPI.

The N-terminal 30 residues, 1–30 (MALLRSLSAQRTAISLVYGRNSSKSSNSVA), are a transit peptide targeting the mitochondrion. Residues 76–87 (STLVQPEVVSSE) show a composition bias toward polar residues. Disordered stretches follow at residues 76–113 (STLV…QRDP) and 216–239 (EEAE…EGSM). Over residues 88 to 99 (TVKRSMKQESSQ) the composition is skewed to basic and acidic residues.

It belongs to the proline oxidase family. Requires FAD as cofactor. In terms of tissue distribution, most abundant in developing nervous system.

The protein localises to the mitochondrion matrix. The catalysed reaction is L-proline + a quinone = (S)-1-pyrroline-5-carboxylate + a quinol + H(+). The protein operates within amino-acid degradation; L-proline degradation into L-glutamate; L-glutamate from L-proline: step 1/2. Functionally, converts proline to delta-1-pyrroline-5-carboxylate. Involved in the conversion of proline to glutamate, which functions as a transmitter at neuromuscular junctions. Glutamate deficiency could possibly account for reduced motor activity. This Drosophila melanogaster (Fruit fly) protein is Proline dehydrogenase 1, mitochondrial (slgA).